The sequence spans 390 residues: 1-deoxy-D-xylulose 5-phosphate reductoisomerase (390 aa).

NADPH-binding residues include threonine 10, glycine 11, serine 12, valine 13, and asparagine 124. Lysine 125 lines the 1-deoxy-D-xylulose 5-phosphate pocket. Glutamate 126 contacts NADPH. Residue aspartate 150 coordinates Mn(2+). 1-deoxy-D-xylulose 5-phosphate contacts are provided by serine 151, glutamate 152, serine 181, and histidine 204. A Mn(2+)-binding site is contributed by glutamate 152. An NADPH-binding site is contributed by glycine 210. 1-deoxy-D-xylulose 5-phosphate is bound by residues serine 217, asparagine 222, lysine 223, and glutamate 226. A Mn(2+)-binding site is contributed by glutamate 226.

This sequence belongs to the DXR family. Requires Mg(2+) as cofactor. It depends on Mn(2+) as a cofactor.

The catalysed reaction is 2-C-methyl-D-erythritol 4-phosphate + NADP(+) = 1-deoxy-D-xylulose 5-phosphate + NADPH + H(+). Its pathway is isoprenoid biosynthesis; isopentenyl diphosphate biosynthesis via DXP pathway; isopentenyl diphosphate from 1-deoxy-D-xylulose 5-phosphate: step 1/6. Catalyzes the NADPH-dependent rearrangement and reduction of 1-deoxy-D-xylulose-5-phosphate (DXP) to 2-C-methyl-D-erythritol 4-phosphate (MEP). The polypeptide is 1-deoxy-D-xylulose 5-phosphate reductoisomerase (Janthinobacterium sp. (strain Marseille) (Minibacterium massiliensis)).